The sequence spans 212 residues: Orotate phosphoribosyltransferase (212 aa).

5-phospho-alpha-D-ribose 1-diphosphate-binding positions include R97, K101, H103, and 123 to 131 (EDLISTGGS). S127 contributes to the orotate binding site.

This sequence belongs to the purine/pyrimidine phosphoribosyltransferase family. PyrE subfamily. In terms of assembly, homodimer. It depends on Mg(2+) as a cofactor.

The enzyme catalyses orotidine 5'-phosphate + diphosphate = orotate + 5-phospho-alpha-D-ribose 1-diphosphate. The protein operates within pyrimidine metabolism; UMP biosynthesis via de novo pathway; UMP from orotate: step 1/2. In terms of biological role, catalyzes the transfer of a ribosyl phosphate group from 5-phosphoribose 1-diphosphate to orotate, leading to the formation of orotidine monophosphate (OMP). This is Orotate phosphoribosyltransferase from Phocaeicola vulgatus (strain ATCC 8482 / DSM 1447 / JCM 5826 / CCUG 4940 / NBRC 14291 / NCTC 11154) (Bacteroides vulgatus).